The chain runs to 452 residues: Bifunctional protein GlmU (452 aa).

The segment at 1–226 (MKNIHAIILA…KFEIAGVNDK (226 aa)) is pyrophosphorylase. UDP-N-acetyl-alpha-D-glucosamine-binding positions include 9-12 (LAAG), Lys23, Gln73, 78-79 (GT), 100-102 (YGD), Gly137, Glu151, Asn166, and Asn224. Residue Asp102 coordinates Mg(2+). Asn224 is a Mg(2+) binding site. Residues 227–247 (VQLAELERIFQINQATQFMQQ) form a linker region. The interval 248–452 (GLSLKDPNRF…LKNWQRPTKK (205 aa)) is N-acetyltransferase. Positions 330 and 348 each coordinate UDP-N-acetyl-alpha-D-glucosamine. The active-site Proton acceptor is His360. Tyr363 and Asn374 together coordinate UDP-N-acetyl-alpha-D-glucosamine. Residues Ala377, 383-384 (NY), Ser402, Ala420, and Arg437 each bind acetyl-CoA.

In the N-terminal section; belongs to the N-acetylglucosamine-1-phosphate uridyltransferase family. The protein in the C-terminal section; belongs to the transferase hexapeptide repeat family. As to quaternary structure, homotrimer. Requires Mg(2+) as cofactor.

Its subcellular location is the cytoplasm. It carries out the reaction alpha-D-glucosamine 1-phosphate + acetyl-CoA = N-acetyl-alpha-D-glucosamine 1-phosphate + CoA + H(+). The enzyme catalyses N-acetyl-alpha-D-glucosamine 1-phosphate + UTP + H(+) = UDP-N-acetyl-alpha-D-glucosamine + diphosphate. It functions in the pathway nucleotide-sugar biosynthesis; UDP-N-acetyl-alpha-D-glucosamine biosynthesis; N-acetyl-alpha-D-glucosamine 1-phosphate from alpha-D-glucosamine 6-phosphate (route II): step 2/2. Its pathway is nucleotide-sugar biosynthesis; UDP-N-acetyl-alpha-D-glucosamine biosynthesis; UDP-N-acetyl-alpha-D-glucosamine from N-acetyl-alpha-D-glucosamine 1-phosphate: step 1/1. The protein operates within bacterial outer membrane biogenesis; LPS lipid A biosynthesis. In terms of biological role, catalyzes the last two sequential reactions in the de novo biosynthetic pathway for UDP-N-acetylglucosamine (UDP-GlcNAc). The C-terminal domain catalyzes the transfer of acetyl group from acetyl coenzyme A to glucosamine-1-phosphate (GlcN-1-P) to produce N-acetylglucosamine-1-phosphate (GlcNAc-1-P), which is converted into UDP-GlcNAc by the transfer of uridine 5-monophosphate (from uridine 5-triphosphate), a reaction catalyzed by the N-terminal domain. This Ruthia magnifica subsp. Calyptogena magnifica protein is Bifunctional protein GlmU.